A 314-amino-acid chain; its full sequence is tRNA uridine(34) hydroxylase (314 aa).

Residues 140 to 234 enclose the Rhodanese domain; that stretch reads SRDDVILVDT…YLEETPAEES (95 aa). Cys-194 functions as the Cysteine persulfide intermediate in the catalytic mechanism.

It belongs to the TrhO family.

It carries out the reaction uridine(34) in tRNA + AH2 + O2 = 5-hydroxyuridine(34) in tRNA + A + H2O. In terms of biological role, catalyzes oxygen-dependent 5-hydroxyuridine (ho5U) modification at position 34 in tRNAs. The protein is tRNA uridine(34) hydroxylase of Acinetobacter baylyi (strain ATCC 33305 / BD413 / ADP1).